The primary structure comprises 111 residues: uncharacterized protein (111 aa).

A helical membrane pass occupies residues 18–41; that stretch reads FFYFFFISFYTLWIVFFLLHLSFF.

Its subcellular location is the membrane. This is an uncharacterized protein from Saccharomyces cerevisiae (strain ATCC 204508 / S288c) (Baker's yeast).